The primary structure comprises 628 residues: Probable potassium transport system protein Kup (628 aa).

12 helical membrane passes run 15 to 35, 55 to 75, 104 to 124, 142 to 162, 173 to 193, 210 to 230, 252 to 272, 281 to 301, 342 to 362, 372 to 392, 400 to 420, and 426 to 446; these read LAIA…LYSL, VISL…VLFV, AGLL…DAVI, PHLS…LFWI, LFGP…LWHI, TFMA…VLVL, WYVL…ALLM, PFFL…STIA, IYVP…VIAF, YGIA…VVMV, LLVA…FGAN, and EGGW…MTWY.

This sequence belongs to the HAK/KUP transporter (TC 2.A.72) family.

The protein localises to the cell inner membrane. The enzyme catalyses K(+)(in) + H(+)(in) = K(+)(out) + H(+)(out). Transport of potassium into the cell. Likely operates as a K(+):H(+) symporter. This chain is Probable potassium transport system protein Kup, found in Paraburkholderia xenovorans (strain LB400).